Reading from the N-terminus, the 232-residue chain is Protein FAM246A (232 aa).

Disordered stretches follow at residues 1 to 47 (MATP…RAPG), 153 to 178 (LPPP…RGPT), and 191 to 232 (AASR…GGGD). Positions 19–31 (EVLRRVTGRRRDP) are enriched in basic and acidic residues. Basic residues predominate over residues 211–220 (APVRKNHKKM).

The protein belongs to the FAM246 family.

The chain is Protein FAM246A from Homo sapiens (Human).